Reading from the N-terminus, the 249-residue chain is MTRYKATISYDGYAFAGFQRQSHARSVQEEIEKTLTRLNKGQTITVHGAGRTDSGVHALGQVIHFDLPYQMDEEKLRFALDTQSPEDIDVISIELVADDFHCRYAKHSKTYEFILDRGRPKNPMRRHYATHFPYPLDVERMQIAIKKLEGTHDFTGFTASGTSVEDKVRTITEASLIVDETGQFLTFTFSGNGFLYKQIRNMVGTLLKIGNNRMPVEQIDLILEKKDRQLAGPTAAPNGLYLKEIRYEE.

The active-site Nucleophile is Asp-53. Tyr-111 lines the substrate pocket.

This sequence belongs to the tRNA pseudouridine synthase TruA family. In terms of assembly, homodimer.

The catalysed reaction is uridine(38/39/40) in tRNA = pseudouridine(38/39/40) in tRNA. Formation of pseudouridine at positions 38, 39 and 40 in the anticodon stem and loop of transfer RNAs. The sequence is that of tRNA pseudouridine synthase A from Streptococcus pneumoniae serotype 19F (strain G54).